Consider the following 342-residue polypeptide: Cathepsin B-like cysteine proteinase 2 (342 aa).

The signal sequence occupies residues 1 to 18; it reads MKYLVLALCTYLCSQSGA. Positions 19–86 are cleaved as a propeptide — activation peptide; that stretch reads DENAAQGIPL…VKEDPDPEVD (68 aa). The N-linked (GlcNAc...) asparagine glycan is linked to N99. Intrachain disulfides connect C100/C128, C111/C156, C147/C214, C148/C152, C185/C218, and C193/C205. C114 is an active-site residue. N138 carries an N-linked (GlcNAc...) asparagine glycan. Residue N198 is glycosylated (N-linked (GlcNAc...) asparagine). H285 is a catalytic residue. N-linked (GlcNAc...) asparagine glycosylation is present at N296. Residue N305 is part of the active site.

This sequence belongs to the peptidase C1 family.

Its function is as follows. Expression of the protease correlates with blood-feeding and suggests a role for the protease in blood digestion. The protein is Cathepsin B-like cysteine proteinase 2 (AC-2) of Haemonchus contortus (Barber pole worm).